We begin with the raw amino-acid sequence, 359 residues long: Phospho-N-acetylmuramoyl-pentapeptide-transferase (359 aa).

10 consecutive transmembrane segments (helical) span residues Tyr21 to Gly41, Thr73 to Leu93, Ile98 to Leu118, Gly143 to Phe163, Val166 to Ser186, Pro202 to Ile222, Val237 to Tyr257, Ile261 to Ile281, Ile286 to Val306, and Lys336 to Leu356.

It belongs to the glycosyltransferase 4 family. MraY subfamily. Mg(2+) serves as cofactor.

The protein resides in the cell inner membrane. It carries out the reaction UDP-N-acetyl-alpha-D-muramoyl-L-alanyl-gamma-D-glutamyl-meso-2,6-diaminopimeloyl-D-alanyl-D-alanine + di-trans,octa-cis-undecaprenyl phosphate = di-trans,octa-cis-undecaprenyl diphospho-N-acetyl-alpha-D-muramoyl-L-alanyl-D-glutamyl-meso-2,6-diaminopimeloyl-D-alanyl-D-alanine + UMP. It participates in cell wall biogenesis; peptidoglycan biosynthesis. Its function is as follows. Catalyzes the initial step of the lipid cycle reactions in the biosynthesis of the cell wall peptidoglycan: transfers peptidoglycan precursor phospho-MurNAc-pentapeptide from UDP-MurNAc-pentapeptide onto the lipid carrier undecaprenyl phosphate, yielding undecaprenyl-pyrophosphoryl-MurNAc-pentapeptide, known as lipid I. The protein is Phospho-N-acetylmuramoyl-pentapeptide-transferase of Desulfosudis oleivorans (strain DSM 6200 / JCM 39069 / Hxd3) (Desulfococcus oleovorans).